The chain runs to 196 residues: Nodulation protein A (196 aa).

The protein belongs to the NodA family.

The protein localises to the cytoplasm. Functionally, N-acyltransferase required for nodulation. Acts in the production of a small, heat-stable compound (Nod) that stimulates mitosis in various plant protoplasts. The sequence is that of Nodulation protein A from Mesorhizobium plurifarium.